Consider the following 959-residue polypeptide: Oxysterol-binding protein-related protein 6 (959 aa).

The disordered stretch occupies residues 1–60 (MSSDEKGISPAHKTSTPTHRSASSSTSSQRESRQSIHVLERTASSSTEPSVSRQLLEPEP). Serine 2 carries the post-translational modification N-acetylserine. A compositionally biased stretch (low complexity) spans 14–29 (TSTPTHRSASSSTSSQ). Residues 30 to 40 (RESRQSIHVLE) are compositionally biased toward basic and acidic residues. Position 35 is a phosphoserine (serine 35). The segment covering 42–53 (TASSSTEPSVSR) has biased composition (polar residues). The PH domain occupies 86–181 (PDRHEGFMLK…WVSKLRHHRL (96 aa)). Residues serine 190 and serine 290 each carry the phosphoserine modification.

This sequence belongs to the OSBP family. In terms of assembly, homodimer. Interacts with OSBPL3. Expressed in skin, respiratory epithelium, small intestine epithelium, pancreas, striated muscle, brain, spinal ganglia, and nervous plexus of the intestine (at protein level). In the brain, specifically in the cerebellum, it is expressed in Purkinje and granule cells. Expressed in hepatocytes and macrophages.

The protein localises to the nucleus envelope. It is found in the cytoplasm. The protein resides in the cytosol. It localises to the endoplasmic reticulum membrane. Its subcellular location is the cell membrane. The protein localises to the endosome membrane. Functionally, regulates cellular transport and efflux of cholesterol. Plays a role in phosphatidylinositol-4-phophate (PI4P) turnover at the neuronal membrane. Binds via its PH domain PI4P, phosphatidylinositol-4,5-diphosphate, phosphatidylinositol-3,4,5-triphosphate, and phosphatidic acid. Weakly binds 25-hydroxycholesterol. The sequence is that of Oxysterol-binding protein-related protein 6 (Osbpl6) from Mus musculus (Mouse).